Here is a 520-residue protein sequence, read N- to C-terminus: Cytochrome P450 monooxygenase oblB (520 aa).

The next 3 helical transmembrane spans lie at 17-37 (VAVI…RLFL), 229-249 (LFMG…SILA), and 320-340 (IGTG…HIVV). Cysteine 462 lines the heme pocket.

It belongs to the cytochrome P450 family. The cofactor is heme.

It is found in the membrane. Its pathway is secondary metabolite biosynthesis; terpenoid biosynthesis. Functionally, cytochrome P450 monooxygenase; part of the gene cluster that mediates the biosynthesis of the sesterterpenes ophiobolins, fungal phytotoxins with potential anti-cancer activities. The first step of the pathway is performed by the sesterterpene synthase oblA that possesses both prenyl transferase and terpene cyclase activity, converting isopentenyl diphosphate and dimethylallyl diphosphate into geranylfarnesyl diphosphate (GFPP) and further converting GFPP into ophiobolin F, respectively. Other sesterterpenoids (C(25) terpenoids) are found as minor products of oblA. It is expected that ophiobolin F is then oxidized to ophiobolin A via ophiobolin C and ophiobolin B intermediates by the combined action of the cytochrome P450 monooxygenase oblB and the FAD-dependent oxidoreductase oblC. Although oblB catalyzes multistep oxygenations at C5 and C21/C7 in a relatively efficient manner, it is unable to convert ophiobolin F to ophiobolin C and produces instead several unexpected derivatives. The protein is Cytochrome P450 monooxygenase oblB of Aspergillus clavatus (strain ATCC 1007 / CBS 513.65 / DSM 816 / NCTC 3887 / NRRL 1 / QM 1276 / 107).